The chain runs to 390 residues: Protein dom34 (390 aa).

Belongs to the eukaryotic release factor 1 family. Pelota subfamily. As to quaternary structure, component of the Dom34-Hbs1 complex, also named Pelota-HBS1L complex, composed of dom34 and hbs1. A divalent metal cation serves as cofactor.

It is found in the cytoplasm. In terms of biological role, component of the Dom34-Hbs1 complex, a complex that recognizes stalled ribosomes and triggers the No-Go Decay (NGD) pathway. In the Dom34-Hbs1 complex, dom34 recognizes ribosomes stalled at the 3' end of an mRNA and engages stalled ribosomes by destabilizing mRNA in the mRNA channel. Following ribosome-binding, the Dom34-Hbs1 complex promotes the disassembly of stalled ribosomes, followed by degradation of damaged mRNAs as part of the NGD pathway. This chain is Protein dom34, found in Schizosaccharomyces pombe (strain 972 / ATCC 24843) (Fission yeast).